The sequence spans 180 residues: MFHATTILAYKGNKGSIIGGDGQVSFGNTVLKGNAVKIRKLLGGKILAGFAGSTADAFNLFDMFERILESTKGDLLKAVIEFSKEWRKDKVLRKLEAMMLVLDREHIFLLSGTGDVVEPEDGKIAAIGSGGNYALAAARALDKFADINEEELVKESLKIAGEICIYTNTNIKTYALWDEK.

Residue Thr5 is part of the active site. Na(+) contacts are provided by Gly161, Cys164, and Thr167.

The protein belongs to the peptidase T1B family. HslV subfamily. As to quaternary structure, a double ring-shaped homohexamer of HslV is capped on each side by a ring-shaped HslU homohexamer. The assembly of the HslU/HslV complex is dependent on binding of ATP.

The protein resides in the cytoplasm. It catalyses the reaction ATP-dependent cleavage of peptide bonds with broad specificity.. Allosterically activated by HslU binding. In terms of biological role, protease subunit of a proteasome-like degradation complex believed to be a general protein degrading machinery. This chain is ATP-dependent protease subunit HslV, found in Campylobacter fetus subsp. fetus (strain 82-40).